Consider the following 651-residue polypeptide: Intraflagellar transport protein 70A (651 aa).

7 TPR repeats span residues 8–41 (DGEY…QYRS), 42–75 (RAGL…TPEV), 140–173 (PESE…MGYK), 175–207 (DLSY…GIRE), 372–405 (LTEQ…YDET), 410–443 (IPVL…CNEH), and 445–478 (IWKL…HYDN). The stretch at 494 to 521 (YIMTSQNEEAEELMRKIEKEEEQIAYEN) forms a coiled coil. Residues 530-563 (CIVNLVIGTLYCAKGNYEFGISRVIKSLEPYNKK) form a TPR 8 repeat.

The protein belongs to the TTC30/dfy-1/fleer family.

The protein localises to the cell projection. It localises to the cilium. Required for polyglutamylation of axonemal tubulin. Plays a role in anterograde intraflagellar transport (IFT), the process by which cilia precursors are transported from the base of the cilium to the site of their incorporation at the tip. In Xenopus tropicalis (Western clawed frog), this protein is Intraflagellar transport protein 70A (ift70a).